The sequence spans 395 residues: Tyrosine--tRNA ligase 2 (395 aa).

The 'HIGH' region motif lies at 42–51; it reads PTAPDIHLGH. A 'KMSKS' region motif is present at residues 226–230; it reads KMSKS. Lys-229 contributes to the ATP binding site. Positions 334–394 constitute an S4 RNA-binding domain; the sequence is IAISNLLKEA…GKRKFARVTI (61 aa).

This sequence belongs to the class-I aminoacyl-tRNA synthetase family. TyrS type 2 subfamily. Homodimer.

The protein localises to the cytoplasm. The catalysed reaction is tRNA(Tyr) + L-tyrosine + ATP = L-tyrosyl-tRNA(Tyr) + AMP + diphosphate + H(+). Catalyzes the attachment of tyrosine to tRNA(Tyr) in a two-step reaction: tyrosine is first activated by ATP to form Tyr-AMP and then transferred to the acceptor end of tRNA(Tyr). The sequence is that of Tyrosine--tRNA ligase 2 from Vibrio cholerae serotype O1 (strain ATCC 39315 / El Tor Inaba N16961).